A 350-amino-acid chain; its full sequence is Biotin synthase (350 aa).

The Radical SAM core domain maps to 63 to 281; that stretch reads GDIELATLLS…IAVARITMPK (219 aa). Residues Cys78, Cys82, and Cys85 each contribute to the [4Fe-4S] cluster site. Positions 122, 153, 213, and 285 each coordinate [2Fe-2S] cluster.

Belongs to the radical SAM superfamily. Biotin synthase family. As to quaternary structure, homodimer. Requires [4Fe-4S] cluster as cofactor. The cofactor is [2Fe-2S] cluster.

It carries out the reaction (4R,5S)-dethiobiotin + (sulfur carrier)-SH + 2 reduced [2Fe-2S]-[ferredoxin] + 2 S-adenosyl-L-methionine = (sulfur carrier)-H + biotin + 2 5'-deoxyadenosine + 2 L-methionine + 2 oxidized [2Fe-2S]-[ferredoxin]. The protein operates within cofactor biosynthesis; biotin biosynthesis; biotin from 7,8-diaminononanoate: step 2/2. Catalyzes the conversion of dethiobiotin (DTB) to biotin by the insertion of a sulfur atom into dethiobiotin via a radical-based mechanism. The protein is Biotin synthase of Acidovorax ebreus (strain TPSY) (Diaphorobacter sp. (strain TPSY)).